Reading from the N-terminus, the 421-residue chain is 4-hydroxy-3-methylbut-2-en-1-yl diphosphate synthase (flavodoxin) (421 aa).

[4Fe-4S] cluster is bound by residues Cys311, Cys314, Cys357, and Glu364.

This sequence belongs to the IspG family. The cofactor is [4Fe-4S] cluster.

It catalyses the reaction (2E)-4-hydroxy-3-methylbut-2-enyl diphosphate + oxidized [flavodoxin] + H2O + 2 H(+) = 2-C-methyl-D-erythritol 2,4-cyclic diphosphate + reduced [flavodoxin]. It participates in isoprenoid biosynthesis; isopentenyl diphosphate biosynthesis via DXP pathway; isopentenyl diphosphate from 1-deoxy-D-xylulose 5-phosphate: step 5/6. In terms of biological role, converts 2C-methyl-D-erythritol 2,4-cyclodiphosphate (ME-2,4cPP) into 1-hydroxy-2-methyl-2-(E)-butenyl 4-diphosphate. This Xanthomonas campestris pv. campestris (strain 8004) protein is 4-hydroxy-3-methylbut-2-en-1-yl diphosphate synthase (flavodoxin).